We begin with the raw amino-acid sequence, 686 residues long: Methionine--tRNA ligase (686 aa).

The 'HIGH' region signature appears at 15 to 25 (PYANGPIHLGH). The Zn(2+) site is built by cysteine 146, cysteine 149, cysteine 159, and cysteine 162. Residues 332–336 (KMSKS) carry the 'KMSKS' region motif. Lysine 335 contributes to the ATP binding site. Positions 585–686 (TFAKTDLRVA…DGAKPGQRIM (102 aa)) constitute a tRNA-binding domain.

It belongs to the class-I aminoacyl-tRNA synthetase family. MetG type 1 subfamily. Homodimer. Zn(2+) is required as a cofactor.

It is found in the cytoplasm. It catalyses the reaction tRNA(Met) + L-methionine + ATP = L-methionyl-tRNA(Met) + AMP + diphosphate. Its function is as follows. Is required not only for elongation of protein synthesis but also for the initiation of all mRNA translation through initiator tRNA(fMet) aminoacylation. This chain is Methionine--tRNA ligase, found in Psychromonas ingrahamii (strain DSM 17664 / CCUG 51855 / 37).